Consider the following 308-residue polypeptide: Probable pyridoxal 5'-phosphate synthase subunit pdx-1 (308 aa).

Residue aspartate 30 participates in D-ribose 5-phosphate binding. Lysine 87 serves as the catalytic Schiff-base intermediate with D-ribose 5-phosphate. Glycine 159 is a binding site for D-ribose 5-phosphate. Arginine 171 provides a ligand contact to D-glyceraldehyde 3-phosphate. Residues glycine 224 and 245-246 each bind D-ribose 5-phosphate; that span reads GS.

This sequence belongs to the PdxS/SNZ family.

The enzyme catalyses aldehydo-D-ribose 5-phosphate + D-glyceraldehyde 3-phosphate + L-glutamine = pyridoxal 5'-phosphate + L-glutamate + phosphate + 3 H2O + H(+). Its pathway is cofactor biosynthesis; pyridoxal 5'-phosphate biosynthesis. Its function is as follows. Catalyzes the formation of pyridoxal 5'-phosphate from ribose 5-phosphate (RBP), glyceraldehyde 3-phosphate (G3P) and ammonia. The ammonia is provided by pdx-2. Can also use ribulose 5-phosphate and dihydroxyacetone phosphate as substrates, resulting from enzyme-catalyzed isomerization of RBP and G3P, respectively. Also plays an indirect role in resistance to singlet oxygen-generating photosensitizers. In Neurospora crassa (strain ATCC 24698 / 74-OR23-1A / CBS 708.71 / DSM 1257 / FGSC 987), this protein is Probable pyridoxal 5'-phosphate synthase subunit pdx-1 (pdx-1).